The primary structure comprises 158 residues: Major latex protein 22 (158 aa).

The protein belongs to the MLP family. In terms of tissue distribution, laticifer.

It is found in the vacuole. It localises to the cytoplasmic vesicle. Functionally, not known; MLPs constitute up to 50% of the soluble latex protein. The polypeptide is Major latex protein 22 (MLP22) (Papaver somniferum (Opium poppy)).